The following is a 405-amino-acid chain: L-carnitine CoA-transferase (405 aa).

Positions 97 and 104 each coordinate CoA. The active-site Nucleophile is Asp-169.

It belongs to the CoA-transferase III family. CaiB subfamily. Homodimer.

The protein resides in the cytoplasm. The catalysed reaction is crotonobetainyl-CoA + (R)-carnitine = crotonobetaine + (R)-carnitinyl-CoA. It carries out the reaction 4-(trimethylamino)butanoyl-CoA + (R)-carnitine = (R)-carnitinyl-CoA + 4-(trimethylamino)butanoate. It functions in the pathway amine and polyamine metabolism; carnitine metabolism. Functionally, catalyzes the reversible transfer of the CoA moiety from gamma-butyrobetainyl-CoA to L-carnitine to generate L-carnitinyl-CoA and gamma-butyrobetaine. Is also able to catalyze the reversible transfer of the CoA moiety from gamma-butyrobetainyl-CoA or L-carnitinyl-CoA to crotonobetaine to generate crotonobetainyl-CoA. This is L-carnitine CoA-transferase from Salmonella choleraesuis (strain SC-B67).